The following is a 430-amino-acid chain: Sphingosine-1-phosphate phosphatase 1 (430 aa).

Residues 34-103 are disordered; that stretch reads SSPAADEDAE…AGSQRRNSLT (70 aa). A Phosphoserine modification is found at Ser101. Thr103 is subject to Phosphothreonine. 4 consecutive transmembrane segments (helical) span residues 121–141, 152–172, 193–213, and 216–236; these read FCLGTELGNELFYILFFPFWI, LVIIWVLVMYLGQCTKDIIRW, MPSTHAMSGTAIPIAMFLLTY, and WQYPLIYGLILIPCWSSLVCL. The segment at 167-175 is phosphatase sequence motif I; sequence KDIIRWPRP. The interval 194–197 is phosphatase sequence motif II; the sequence is PSTH. His197 acts as the Proton donor in catalysis. Residues 237-248 are phosphatase sequence motif III; the sequence is SRIYMGMHSILD. His244 serves as the catalytic Nucleophile. Helical transmembrane passes span 246–266, 279–299, 311–331, 348–368, and 409–429; these read ILDVIAGFLYTILILIIFYPL, YAPLIIIGLHLILGIFSFTLD, ILGSGAGIACGSHAAYTLGLS, VTLFGKAILRIVLGMLLVLFV, and YGMVGFSITFLVPYVFSFIGI.

This sequence belongs to the type 2 lipid phosphate phosphatase family. Highly expressed in liver and kidney. Expressed in epidermis, in the stratum granulosum and the stratum spinosum.

It is found in the endoplasmic reticulum membrane. The protein resides in the cell membrane. It carries out the reaction sphinganine 1-phosphate + H2O = sphinganine + phosphate. It catalyses the reaction sphing-4-enine 1-phosphate + H2O = sphing-4-enine + phosphate. Its activity is regulated as follows. Inhibited by NaF, sodium orthovanadate, propanolol, and N-ethylmaleimide. In terms of biological role, specifically dephosphorylates sphingosine 1-phosphate (S1P), dihydro-S1P, and phyto-S1P. Does not act on ceramide 1-phosphate, lysophosphatidic acid or phosphatidic acid. Sphingosine-1-phosphate phosphatase activity is needed for efficient recycling of sphingosine into the sphingolipid synthesis pathway. Regulates the intracellular levels of the bioactive sphingolipid metabolite S1P that regulates diverse biological processes acting both as an extracellular receptor ligand or as an intracellular second messenger. Involved in efficient ceramide synthesis from exogenous sphingoid bases. Converts S1P to sphingosine, which is readily metabolized to ceramide via ceramide synthase. In concert with sphingosine kinase 2 (SphK2), recycles sphingosine into ceramide through a phosphorylation/dephosphorylation cycle. Regulates endoplasmic-to-Golgi trafficking of ceramides, resulting in the regulation of ceramide levels in the endoplasmic reticulum, preferentially long-chain ceramide species, and influences the anterograde membrane transport of both ceramide and proteins from the endoplasmic reticulum to the Golgi apparatus. The modulation of intracellular ceramide levels in turn regulates apoptosis. Via S1P levels, modulates resting tone, intracellular Ca(2+) and myogenic vasoconstriction in resistance arteries. Also involved in unfolded protein response (UPR) and ER stress-induced autophagy via regulation of intracellular S1P levels. Involved in the regulation of epidermal homeostasis and keratinocyte differentiation. This chain is Sphingosine-1-phosphate phosphatase 1, found in Mus musculus (Mouse).